We begin with the raw amino-acid sequence, 456 residues long: Molybdate transporter 1 (456 aa).

9 helical membrane-spanning segments follow: residues 67 to 87 (LIFT…PMPV), 110 to 130 (IMAA…SGLM), 133 to 153 (VFNI…GLAF), 177 to 197 (PWLG…IVLV), 225 to 245 (VIAN…LAFI), 309 to 329 (AASV…FGAM), 354 to 374 (LLGV…VGIL), 377 to 397 (FPVG…AMAA), and 417 to 437 (LGSN…VLWM).

The protein belongs to the SLC26A/SulP transporter (TC 2.A.53) family. Strongly expressed in roots. Detected in the vascular tissues of hypocotyls, in petioles and vascular tissues of cotyledons and leaves, in mesophyll cells, stamen, sepals and siliques.

The protein resides in the cell membrane. The protein localises to the endomembrane system. Its subcellular location is the mitochondrion membrane. Not inhibited by sulfate. High affinity molybdate transporter. Unable to transport sulfate. The sequence is that of Molybdate transporter 1 (MOT1) from Arabidopsis thaliana (Mouse-ear cress).